A 485-amino-acid chain; its full sequence is NADH-quinone oxidoreductase subunit N (485 aa).

A run of 14 helical transmembrane segments spans residues 8–28 (LIALLPLLIVGLTVVVVMLSI), 35–55 (FLNATLSVIGLNAALVSLWFV), 71–91 (GFAMLYTGLVLLASLATCTFA), 105–125 (FYLLVLIAALGGILLANANHL), 127–147 (SLFLGIELISLPLFGLVGYAF), 159–179 (YTILSAAASSFLLFGMALVYA), 203–223 (LLAGFGLMIVGLGFKLSLVPF), 235–255 (PAPVSTFLATASKIVIFGVVM), 271–291 (VVLAIIAFASIIFGNLMALSQ), 297–317 (LLGYSSISHLGYLLVALIALQ), 326–346 (VGVYLAGYLFSSLGAFGVVSL), 373–393 (AAVMTVMMLSLAGIPMTLGFI), 408–430 (WWLVGAVVVGSAIGLYYYLRVAV), and 455–475 (IVVLISALLVLVLGVWPQPLI).

The protein belongs to the complex I subunit 2 family. In terms of assembly, NDH-1 is composed of 13 different subunits. Subunits NuoA, H, J, K, L, M, N constitute the membrane sector of the complex.

Its subcellular location is the cell inner membrane. It catalyses the reaction a quinone + NADH + 5 H(+)(in) = a quinol + NAD(+) + 4 H(+)(out). In terms of biological role, NDH-1 shuttles electrons from NADH, via FMN and iron-sulfur (Fe-S) centers, to quinones in the respiratory chain. The immediate electron acceptor for the enzyme in this species is believed to be ubiquinone. Couples the redox reaction to proton translocation (for every two electrons transferred, four hydrogen ions are translocated across the cytoplasmic membrane), and thus conserves the redox energy in a proton gradient. This is NADH-quinone oxidoreductase subunit N from Shigella dysenteriae serotype 1 (strain Sd197).